Consider the following 457-residue polypeptide: Chromosomal replication initiator protein DnaA (457 aa).

Residues 1-90 (MAVSLWQQCI…RPSAKPQAPA (90 aa)) are domain I, interacts with DnaA modulators. Residues 79 to 120 (GSRPSAKPQAPAPAAVKAAAPQPKPGNSFVSQPEPAVSNHRS) are disordered. Residues 84 to 99 (AKPQAPAPAAVKAAAP) are compositionally biased toward low complexity. Residues 91–120 (PAAVKAAAPQPKPGNSFVSQPEPAVSNHRS) form a domain II region. A domain III, AAA+ region region spans residues 121-337 (NINPTYQFDN…GALNRVIANA (217 aa)). G165, G167, K168, and T169 together coordinate ATP. A domain IV, binds dsDNA region spans residues 338-457 (NFTGRPITID…YANLIRTLSS (120 aa)).

It belongs to the DnaA family. In terms of assembly, oligomerizes as a right-handed, spiral filament on DNA at oriC.

It localises to the cytoplasm. Its function is as follows. Plays an essential role in the initiation and regulation of chromosomal replication. ATP-DnaA binds to the origin of replication (oriC) to initiate formation of the DNA replication initiation complex once per cell cycle. Binds the DnaA box (a 9 base pair repeat at the origin) and separates the double-stranded (ds)DNA. Forms a right-handed helical filament on oriC DNA; dsDNA binds to the exterior of the filament while single-stranded (ss)DNA is stabiized in the filament's interior. The ATP-DnaA-oriC complex binds and stabilizes one strand of the AT-rich DNA unwinding element (DUE), permitting loading of DNA polymerase. After initiation quickly degrades to an ADP-DnaA complex that is not apt for DNA replication. Binds acidic phospholipids. This is Chromosomal replication initiator protein DnaA from Shewanella amazonensis (strain ATCC BAA-1098 / SB2B).